The primary structure comprises 353 residues: UPF0283 membrane protein YcjF (353 aa).

Residues methionine 1–proline 19 are compositionally biased toward basic and acidic residues. A disordered region spans residues methionine 1 to arginine 35. Residues methionine 1–lysine 69 lie on the Periplasmic side of the membrane. The chain crosses the membrane as a helical span at residues methionine 70–threonine 90. At methionine 91–tryptophan 99 the chain is on the cytoplasmic side. The chain crosses the membrane as a helical span at residues valine 100–valine 120. Residues threonine 121 to alanine 212 lie on the Periplasmic side of the membrane. A helical transmembrane segment spans residues glutamate 213–tryptophan 233. The Cytoplasmic portion of the chain corresponds to arginine 234–lysine 353.

Belongs to the UPF0283 family.

It localises to the cell inner membrane. This Salmonella typhimurium (strain LT2 / SGSC1412 / ATCC 700720) protein is UPF0283 membrane protein YcjF (ycjF).